Here is a 274-residue protein sequence, read N- to C-terminus: Rhamnulose-1-phosphate aldolase (274 aa).

Glu117 is an active-site residue. Residues His141, His143, and His212 each contribute to the Zn(2+) site.

This sequence belongs to the aldolase class II family. RhaD subfamily. As to quaternary structure, homotetramer. Requires Zn(2+) as cofactor.

Its subcellular location is the cytoplasm. The catalysed reaction is L-rhamnulose 1-phosphate = (S)-lactaldehyde + dihydroxyacetone phosphate. It functions in the pathway carbohydrate degradation; L-rhamnose degradation; glycerone phosphate from L-rhamnose: step 3/3. Its function is as follows. Catalyzes the reversible cleavage of L-rhamnulose-1-phosphate to dihydroxyacetone phosphate (DHAP) and L-lactaldehyde. The polypeptide is Rhamnulose-1-phosphate aldolase (Yersinia pseudotuberculosis serotype I (strain IP32953)).